Here is a 209-residue protein sequence, read N- to C-terminus: Probable GTP-binding protein EngB (209 aa).

The 177-residue stretch at 22–198 (TPLEIAFVGR…NRTVGSWLDA (177 aa)) folds into the EngB-type G domain. Residues Ser37 and Thr59 each coordinate Mg(2+).

It belongs to the TRAFAC class TrmE-Era-EngA-EngB-Septin-like GTPase superfamily. EngB GTPase family. It depends on Mg(2+) as a cofactor.

Necessary for normal cell division and for the maintenance of normal septation. This Neisseria meningitidis serogroup B (strain ATCC BAA-335 / MC58) protein is Probable GTP-binding protein EngB.